A 237-amino-acid polypeptide reads, in one-letter code: Cysteine-rich venom protein DIS3 (237 aa).

The N-terminal stretch at 1–18 is a signal peptide; that stretch reads MFVFILLSLAAVLQQSFG. Positions 37–165 constitute an SCP domain; it reads VDKHNAFRRS…SYDYFYVCQY (129 aa). 7 disulfides stabilise this stretch: Cys74-Cys152, Cys91-Cys166, Cys147-Cys163, Cys185-Cys192, Cys188-Cys197, Cys201-Cys234, and Cys219-Cys232. A ShKT domain is found at 201-234; the sequence is CSREDVFTNCKSLVAKSNCQDDYIRKNCLATCFC.

It belongs to the CRISP family. Expressed by the venom gland.

It is found in the secreted. In terms of biological role, weakly blocks contraction of smooth muscle elicited by high potassium-induced depolarization, but does not block caffeine-stimulated contraction. May target voltage-gated calcium channels on smooth muscle. In Dispholidus typus (Boomslang), this protein is Cysteine-rich venom protein DIS3.